The sequence spans 268 residues: N-formylmaleamate deformylase (268 aa).

One can recognise an AB hydrolase-1 domain in the interval 28 to 251; the sequence is ALILVPGITS…NAGHMIPWDD (224 aa). Residues Ser101, Glu221, and His245 each act as charge relay system in the active site.

The enzyme catalyses N-formylmaleamate + H2O = maleamate + formate + H(+). Its pathway is cofactor degradation; nicotinate degradation. Its function is as follows. Deformylase that catalyzes the conversion of N-formylmaleamic acid to maleamate in the aerobic nicotinate degradation pathway. The protein is N-formylmaleamate deformylase (nicD) of Pseudomonas putida (strain ATCC 47054 / DSM 6125 / CFBP 8728 / NCIMB 11950 / KT2440).